A 657-amino-acid polypeptide reads, in one-letter code: Glycogen debranching enzyme (657 aa).

The Nucleophile role is filled by D336. Catalysis depends on E371, which acts as the Proton donor. Residues 460–479 are disordered; the sequence is ANGEENRDGTNNNYSNNHGK.

It belongs to the glycosyl hydrolase 13 family.

It carries out the reaction Hydrolysis of (1-&gt;6)-alpha-D-glucosidic linkages to branches with degrees of polymerization of three or four glucose residues in limit dextrin.. It functions in the pathway glycan degradation; glycogen degradation. In terms of biological role, removes maltotriose and maltotetraose chains that are attached by 1,6-alpha-linkage to the limit dextrin main chain, generating a debranched limit dextrin. In Escherichia coli (strain SMS-3-5 / SECEC), this protein is Glycogen debranching enzyme.